A 524-amino-acid chain; its full sequence is MQCSIKQILSDATDKLNKIGISSPQLEARILLQHVINKPIEYLLINLDEQLNEAKIEAFEKLLARRLKHEPIVYITGVKEFYSREFIVNKHVLIPRSDTEVLVDVVFQCHSRESGNPEKKQPNPCFRGNDISENCNDKFLNILELGTGSGCIAISLLCELPNANVIATDISLDAIDIIKSNAAKYEVTDRIQIIHSNWFENIETQKFDFIVSNPPYIAHSEKSEMAIETINYEPSIALFAEKDGLQAYFLIAENAKQFLKPNGKIILEIGFKQEEAVTQIFLDHGYNIESVYKDLQGHSRVILFSPINLNRSYARRIGKSLSGVQKNLLDNKLPKYLFSKEKLVNEKRKVFLEIGFGMGEHFINQAKMNPNALFIGIEVYLNGVANVLKLAGEQNITNFLLFPNNLDLILNEIPSNSLDGIYILFPDPWIKNKQKKKRIFNKERLKLLQDKLKDNGNLVFASDIENYFYEAIELIQQNGNFEIINKNDYLKPHDNYVITKYHQKAIKANRTPKFMILRHVLGDH.

The hemK stretch occupies residues Met-1–Pro-306. Residues Met-1 to Asn-308 form an RF MTase region. S-adenosyl-L-methionine is bound by residues Gly-146–Gly-150, Asp-169, Trp-198, Asn-213, Glu-353, Glu-378, Asn-405, and Asp-427. Position 213–216 (Asn-213–Tyr-216) interacts with substrate. The segment at Ile-307–His-524 is tRNA (guanine-N(7)-)-methyltransferase. A tRNA MTase region spans residues Arg-311–His-524. Residue Asp-427 is part of the active site. Substrate-binding residues include Lys-431 and Asp-463.

It in the C-terminal section; belongs to the class I-like SAM-binding methyltransferase superfamily. TrmB family. In the N-terminal section; belongs to the protein N5-glutamine methyltransferase family. PrmC subfamily.

The catalysed reaction is L-glutaminyl-[peptide chain release factor] + S-adenosyl-L-methionine = N(5)-methyl-L-glutaminyl-[peptide chain release factor] + S-adenosyl-L-homocysteine + H(+). It carries out the reaction guanosine(46) in tRNA + S-adenosyl-L-methionine = N(7)-methylguanosine(46) in tRNA + S-adenosyl-L-homocysteine. Its function is as follows. Methylates the class 1 translation termination release factors RF1/PrfA and RF2/PrfB on the glutamine residue of the universally conserved GGQ motif. In terms of biological role, catalyzes the formation of N(7)-methylguanine at position 46 (m7G46) in tRNA. The sequence is that of Bifunctional methyltransferase (prmC/trmB) from Rickettsia conorii (strain ATCC VR-613 / Malish 7).